Reading from the N-terminus, the 468-residue chain is Glycosyl hydrolase family 109 protein (468 aa).

The signal sequence occupies residues 1–19 (MVYKVFLSLCIGLALSASA). NAD(+) is bound by residues 67-68 (MR), Asp-89, 138-141 (WKTH), 158-159 (EV), and Asn-187. Residues Tyr-216, Arg-232, 244–247 (YATH), and Tyr-322 each bind substrate. Tyr-244 lines the NAD(+) pocket.

It belongs to the Gfo/Idh/MocA family. Glycosyl hydrolase 109 subfamily. NAD(+) serves as cofactor.

Its function is as follows. Glycosidase. The polypeptide is Glycosyl hydrolase family 109 protein (Porphyromonas gingivalis (strain ATCC BAA-308 / W83)).